A 384-amino-acid chain; its full sequence is Methyl-CpG-binding domain-containing protein 10 (384 aa).

An MBD domain is found at 4–74; sequence TDELVSIELP…SEFEWTTGET (71 aa). The interval 65–384 is disordered; sequence SEFEWTTGET…QQGAAASVSC (320 aa). Over residues 80–91 the composition is skewed to polar residues; the sequence is RISQKVKATTPT. Positions 100–224 form a coiled coil; it reads KRRSSLTKKD…MEVDTSELEK (125 aa). Basic and acidic residues-rich tracts occupy residues 106–227, 234–250, and 257–269; these read TKKD…KKAG, EPSK…KEAQ, and DVEK…KTEN. Over residues 270-284 the composition is skewed to polar residues; it reads KGSVTTEANGEQNVT. The segment covering 295 to 365 has biased composition (basic and acidic residues); the sequence is EADKGKESKE…NDMKAEDTNR (71 aa). Residues 310 to 356 are a coiled coil; sequence TEAEANKENDTQESDEKKTEAAANKENETQESDVKKTEAAVAEEKSN. Ser-323 bears the Phosphoserine mark. The segment covering 369–384 has biased composition (low complexity); it reads ANQVQQQQGAAASVSC.

As to expression, expressed in leaves, buds, flowers, stems and siliques.

The protein resides in the nucleus. Its function is as follows. Probable transcriptional regulator. Required for nucleolar dominance that consist in the silencing of rRNA genes inherited from one progenitor in genetic hybrids. The chain is Methyl-CpG-binding domain-containing protein 10 (MBD10) from Arabidopsis thaliana (Mouse-ear cress).